A 243-amino-acid chain; its full sequence is Tubulin-folding cofactor B (243 aa).

In terms of domain architecture, CAP-Gly spans 181–223 (RAESLGPGYWVGIQYDEPLGKHDGMVKGTRFFECPRLQGGMVR).

The protein belongs to the TBCB family. Supercomplex made of cofactors A to E. Cofactors A and D function by capturing and stabilizing tubulin in a quasi-native conformation. Cofactor E binds to the cofactor D-tubulin complex; interaction with cofactor C then causes the release of tubulin polypeptides that are committed to the native state. Interacts with TUBA6. In terms of tissue distribution, expressed in roots, stems, leaves, flowers and siliques.

Its subcellular location is the cytoplasm. Involved in control of cell division. Regulates probably the availability of alpha-tubulin for dimerization of alpha-/beta-tubulin, which is required for proper microtubule biogenesis. Decreased expression of TFCB results in enlarged mesophyll cells and leaf epidermal cells with bulged nuclei, increased ploidy and increased numbers of spindles and phragmoplasts. This Arabidopsis thaliana (Mouse-ear cress) protein is Tubulin-folding cofactor B (TFCB).